We begin with the raw amino-acid sequence, 158 residues long: Small ribosomal subunit protein uS7c (158 aa).

The protein belongs to the universal ribosomal protein uS7 family. As to quaternary structure, part of the 30S ribosomal subunit.

Its subcellular location is the plastid. The protein localises to the chloroplast. One of the primary rRNA binding proteins, it binds directly to 16S rRNA where it nucleates assembly of the head domain of the 30S subunit. This is Small ribosomal subunit protein uS7c (rps7) from Trieres chinensis (Marine centric diatom).